Here is a 411-residue protein sequence, read N- to C-terminus: Squalene synthase (411 aa).

The next 2 helical transmembrane spans lie at 281–301 and 388–408; these read SIFR…AMCY and SPVL…QLSG.

This sequence belongs to the phytoene/squalene synthase family. It depends on Mg(2+) as a cofactor.

The protein resides in the endoplasmic reticulum membrane. The catalysed reaction is 2 (2E,6E)-farnesyl diphosphate + NADPH + H(+) = squalene + 2 diphosphate + NADP(+). It carries out the reaction 2 (2E,6E)-farnesyl diphosphate + NADH + H(+) = squalene + 2 diphosphate + NAD(+). Its pathway is terpene metabolism; lanosterol biosynthesis; lanosterol from farnesyl diphosphate: step 1/3. The sequence is that of Squalene synthase from Nicotiana benthamiana.